A 433-amino-acid chain; its full sequence is KH domain-containing, RNA-binding, signal transduction-associated protein 1 (433 aa).

A disordered region spans residues 1–79 (MQRRDDSSAR…PLLPGGAVKM (79 aa)). Positions 41–76 (GAQHPQPLLTGGAAAGSSGAQGPAAANPAPLLPGGA) are enriched in low complexity. The involved in homodimerization stretch occupies residues 82-243 (ENKYLPELMA…VKKFLVPDMM (162 aa)). Residues 171–197 (QEETGAKISVLGKGSMRDKAKEEELRK) enclose the KH domain. Disordered regions lie at residues 259–305 (GVPE…ALVR), 317–351 (AAVARGVPPPPAVRGAPAPRARAAGIQRIPLPPPP), and 403–433 (QDDWNGTRPSLKAPPARPVKGAYREHPYGRY). The segment covering 277 to 300 (APPPPPPVPRGRGVGPPPPPPPPR) has biased composition (pro residues). Low complexity predominate over residues 329–342 (VRGAPAPRARAAGI). The span at 424 to 433 (AYREHPYGRY) shows a compositional bias: basic and acidic residues.

The protein belongs to the KHDRBS family. In terms of assembly, self-associates to form homooligomers when bound to RNA, oligomerization appears to be limited when binding to proteins. In terms of processing, tyrosine phosphorylated by several non-receptor tyrosine kinases including LCK, FYN and JAK3. Acetylated. Positively correlates with ability to bind RNA. Post-translationally, methylated by HRMT1L2. Required for nuclear localization.

It is found in the nucleus. Its subcellular location is the cytoplasm. The protein localises to the membrane. In terms of biological role, recruited and tyrosine phosphorylated by several receptor systems, for example the T-cell, leptin and insulin receptors. Once phosphorylated, functions as an adapter protein in signal transduction cascades by binding to SH2 and SH3 domain-containing proteins. Role in G2-M progression in the cell cycle. Represses CBP-dependent transcriptional activation apparently by competing with other nuclear factors for binding to CBP. Also acts as a putative regulator of mRNA stability and/or translation rates and mediates mRNA nuclear export. Plays a role in the regulation of alternative splicing and influences mRNA splice site selection and exon inclusion. In Gallus gallus (Chicken), this protein is KH domain-containing, RNA-binding, signal transduction-associated protein 1.